The following is a 591-amino-acid chain: MKMTTEEAFVKVLQMHGIEHAFGIIGSAMMPVSDLFPKAGIRFWDCAHETNAGMMADGFSRATGTMSMAIGQNGPGVTGFITAMKTAYWNHTPLLMVTPQAANKTIGQGGFQEVDQMAMFEEMVCYQEEVRDPSRIPEVLNRVIEKAWRGCAPAQINIPRDFWTQVIDVDLPRIVRFERPAGGPAAIAQAARLLSEAKFPVILNGAGVVIGNAIQESMALAEKLDAPVCCGYQHNDAFPGSHRLSVGPLGYNGSKAAMELISKADVVLALGTRLNPFSTLPGYGIDYWPKDAAIIQVDINADRIGLTKKVTVGICGDAKQVAQQILQQLAPAAGDASREERKALVHQTRSAWLQQLSSMDHEDDDPGTEWNVGARQREPDRMSPRQVWRAIQAVLPKEAIISTDIGNNCAIGNAYPSFEQGRKYLAPGMFGPCGYGFPSIVGAKIGCPDVPVVGFAGDGAFGISMNEMTSIGREGWPAITMVIFRNYQWGAEKRNTTLWYDNNFVGTELNPNLSYAKVADGCGLKGVTVDTPAALTEALAKAIEDQAKGITTFVEVVLNQELGEPFRRDAMKKPVAVAGIDRADMRTQRRM.

The interval 359-383 (MDHEDDDPGTEWNVGARQREPDRMS) is disordered.

Belongs to the TPP enzyme family. It depends on Mg(2+) as a cofactor. The cofactor is thiamine diphosphate.

It is found in the cytoplasm. The enzyme catalyses acetyl phosphate + sulfite + H(+) = sulfoacetaldehyde + phosphate. Its pathway is organosulfur degradation; taurine degradation via aerobic pathway; acetyl phosphate and sulfite from taurine: step 2/2. The polypeptide is Probable sulfoacetaldehyde acetyltransferase (xsc) (Rhizobium meliloti (strain 1021) (Ensifer meliloti)).